We begin with the raw amino-acid sequence, 434 residues long: Enolase (434 aa).

Gln163 provides a ligand contact to (2R)-2-phosphoglycerate. Glu205 acts as the Proton donor in catalysis. Asp242, Glu289, and Asp316 together coordinate Mg(2+). The (2R)-2-phosphoglycerate site is built by Lys341, Arg370, Ser371, and Lys392. The active-site Proton acceptor is Lys341.

The protein belongs to the enolase family. The cofactor is Mg(2+).

The protein resides in the cytoplasm. Its subcellular location is the secreted. It localises to the cell surface. It catalyses the reaction (2R)-2-phosphoglycerate = phosphoenolpyruvate + H2O. It functions in the pathway carbohydrate degradation; glycolysis; pyruvate from D-glyceraldehyde 3-phosphate: step 4/5. Its function is as follows. Catalyzes the reversible conversion of 2-phosphoglycerate (2-PG) into phosphoenolpyruvate (PEP). It is essential for the degradation of carbohydrates via glycolysis. The protein is Enolase of Lacticaseibacillus casei (strain BL23) (Lactobacillus casei).